A 455-amino-acid chain; its full sequence is Yop proteins translocation protein P (455 aa).

Disordered stretches follow at residues 38–82 (NKGN…QPGR) and 430–455 (DFQA…EAEE). Composition is skewed to basic and acidic residues over residues 43-69 (HPKE…DGLR) and 439-449 (QESRQKRHVYE).

The protein belongs to the SpaN family.

It is found in the cytoplasm. Its function is as follows. Component of the yop secretion machinery. In Yersinia pseudotuberculosis serotype I (strain IP32953), this protein is Yop proteins translocation protein P (yscP).